A 37-amino-acid chain; its full sequence is Mating pheromone Er-20 (37 aa).

3 disulfides stabilise this stretch: Cys3/Cys18, Cys10/Cys32, and Cys15/Cys24.

In terms of assembly, homodimer.

The protein resides in the secreted. Its function is as follows. Mating ciliate pheromones (or gamones) are diffusible extracellular communication signals that distinguish different intraspecific classes of cells commonly referred to as 'mating types'. They prepare the latter for conjugation by changing their cell surface properties. The sequence is that of Mating pheromone Er-20 (MAT20) from Euplotes raikovi.